Consider the following 47-residue polypeptide: Delta-ctenitoxin-Pr2d (47 aa).

5 disulfide bridges follow: C3/C17, C10/C23, C14/C46, C16/C31, and C25/C29.

Expressed by the venom gland.

It localises to the secreted. Blocks voltage-gated sodium channels (Nav). Causes rapid general spastic paralysis and death when injected in mice at dose levels of less than 2 ug per mouse. This is Delta-ctenitoxin-Pr2d from Phoneutria reidyi (Brazilian Amazonian armed spider).